Reading from the N-terminus, the 397-residue chain is 2,6-dihydroxypyridine 3-monooxygenase (397 aa).

Residues 14–16, 35–36, valine 49, leucine 120, aspartate 306, and 316–320 each bind FAD; these read SIS, ER, and AAGGA.

As to quaternary structure, homodimer. The cofactor is FAD.

It catalyses the reaction 2,6-dihydroxypyridine + NADH + O2 + H(+) = 2,3,6-trihydroxypyridine + NAD(+) + H2O. The protein operates within alkaloid degradation; nicotine degradation. In terms of biological role, catalyzes the conversion of 2,6-dihydroxypyridine into 2,3,6-trihydroxypyridine in the nicotine degradation pathway. In Paenarthrobacter nicotinovorans (Arthrobacter nicotinovorans), this protein is 2,6-dihydroxypyridine 3-monooxygenase (dhpH).